Consider the following 206-residue polypeptide: Ribosomal RNA small subunit methyltransferase G (206 aa).

S-adenosyl-L-methionine-binding positions include glycine 73, leucine 78, 124-125 (VE), and arginine 139.

The protein belongs to the methyltransferase superfamily. RNA methyltransferase RsmG family.

Its subcellular location is the cytoplasm. It carries out the reaction guanosine(527) in 16S rRNA + S-adenosyl-L-methionine = N(7)-methylguanosine(527) in 16S rRNA + S-adenosyl-L-homocysteine. Specifically methylates the N7 position of guanine in position 527 of 16S rRNA. The polypeptide is Ribosomal RNA small subunit methyltransferase G (Yersinia pseudotuberculosis serotype O:3 (strain YPIII)).